The primary structure comprises 551 residues: MSFDGFFLHHIVEELRSELVNGRIQKINQPFEQELVLQIRSNRQSHRLLLSAHPVFGRIQLTQTTFENPAQPSTFIMVLRKYLQGALIESIEQVENDRIVEMTVSNKNEIGDHIQATLIIEIMGKHSNILLVDKSSHKILEVIKHVGFSQNSYRTLLPGSTYIAPPSTESLNPFTIKDEKLFEILQTQELTAKNLQSLFQGLGRDTANELERILVSEKLSAFRNFFNQETKPCLTETSFSPVPFANQAGEPFANLSDLLDTYYKNKAERDRVKQQASELIRRVENELQKNRHKLKKQEKELLATDNAEEFRQKGELLTTFLHQVPNDQDQVILDNYYTNQPIMIALDKALTPNQNAQRYFKRYQKLKEAVKYLTDLIEETKATILYLESVETVLNQAGLEEIAEIREELIQTGFIRRRQREKIQKRKKLEQYLASDGKTIIYVGRNNLQNEELTFKMARKEELWFHAKDIPGSHVVISGNLDPSDAVKTDAAELAAYFSQGRLSNLVQVDMIEVKKLNKPTGGKPGFVTYTGQKTLRVTPDSKKIASMKKS.

The protein belongs to the NEMF family. In terms of assembly, associates with stalled 50S ribosomal subunits, binds to RqcP. Interacts with human fibronectin.

It is found in the secreted. The protein resides in the capsule. Its subcellular location is the cell surface. It localises to the cytoplasm. Its function is as follows. Key component of the ribosome quality control system (RQC), a ribosome-associated complex that mediates the extraction of incompletely synthesized nascent chains from stalled ribosomes and their subsequent degradation. RqcH recruits Ala-charged tRNA, and with RqcP directs the elongation of stalled nascent chains on 50S ribosomal subunits, leading to non-templated C-terminal alanine extensions (Ala tail). The Ala tail promotes nascent chain degradation. May add between 1 and at least 8 Ala residues. Binds to stalled 50S ribosomal subunits. Plays a significant role in virulence. Recombinant protein binds to immobilized human fibronectin; binding is saturable and competed by heparin. Purified protein inhibits binding of whole cells to fibronectin. The protein is Rqc2 homolog RqcH of Streptococcus pneumoniae serotype 2 (strain D39 / NCTC 7466).